A 313-amino-acid polypeptide reads, in one-letter code: Malate dehydrogenase (313 aa).

Position 11–16 (11–16 (GAGHTG)) interacts with NAD(+). Substrate contacts are provided by R86 and R92. NAD(+)-binding positions include N99 and 122 to 124 (LTN). Positions 124 and 155 each coordinate substrate. Catalysis depends on H179, which acts as the Proton acceptor.

This sequence belongs to the LDH/MDH superfamily. MDH type 3 family.

The enzyme catalyses (S)-malate + NAD(+) = oxaloacetate + NADH + H(+). Catalyzes the reversible oxidation of malate to oxaloacetate. This is Malate dehydrogenase from Staphylococcus epidermidis (strain ATCC 35984 / DSM 28319 / BCRC 17069 / CCUG 31568 / BM 3577 / RP62A).